A 282-amino-acid chain; its full sequence is 4-hydroxy-3-methylbut-2-enyl diphosphate reductase (282 aa).

Cys14 is a binding site for [4Fe-4S] cluster. His43 and His78 together coordinate (2E)-4-hydroxy-3-methylbut-2-enyl diphosphate. Dimethylallyl diphosphate contacts are provided by His43 and His78. 2 residues coordinate isopentenyl diphosphate: His43 and His78. Cys100 contributes to the [4Fe-4S] cluster binding site. His128 contributes to the (2E)-4-hydroxy-3-methylbut-2-enyl diphosphate binding site. His128 provides a ligand contact to dimethylallyl diphosphate. An isopentenyl diphosphate-binding site is contributed by His128. Glu130 serves as the catalytic Proton donor. Thr164 serves as a coordination point for (2E)-4-hydroxy-3-methylbut-2-enyl diphosphate. A [4Fe-4S] cluster-binding site is contributed by Cys192. The (2E)-4-hydroxy-3-methylbut-2-enyl diphosphate site is built by Ser220, Ser221, Asn222, and Ser266. 4 residues coordinate dimethylallyl diphosphate: Ser220, Ser221, Asn222, and Ser266. The isopentenyl diphosphate site is built by Ser220, Ser221, Asn222, and Ser266.

The protein belongs to the IspH family. Requires [4Fe-4S] cluster as cofactor.

The enzyme catalyses isopentenyl diphosphate + 2 oxidized [2Fe-2S]-[ferredoxin] + H2O = (2E)-4-hydroxy-3-methylbut-2-enyl diphosphate + 2 reduced [2Fe-2S]-[ferredoxin] + 2 H(+). It carries out the reaction dimethylallyl diphosphate + 2 oxidized [2Fe-2S]-[ferredoxin] + H2O = (2E)-4-hydroxy-3-methylbut-2-enyl diphosphate + 2 reduced [2Fe-2S]-[ferredoxin] + 2 H(+). Its pathway is isoprenoid biosynthesis; dimethylallyl diphosphate biosynthesis; dimethylallyl diphosphate from (2E)-4-hydroxy-3-methylbutenyl diphosphate: step 1/1. It functions in the pathway isoprenoid biosynthesis; isopentenyl diphosphate biosynthesis via DXP pathway; isopentenyl diphosphate from 1-deoxy-D-xylulose 5-phosphate: step 6/6. Catalyzes the conversion of 1-hydroxy-2-methyl-2-(E)-butenyl 4-diphosphate (HMBPP) into a mixture of isopentenyl diphosphate (IPP) and dimethylallyl diphosphate (DMAPP). Acts in the terminal step of the DOXP/MEP pathway for isoprenoid precursor biosynthesis. The sequence is that of 4-hydroxy-3-methylbut-2-enyl diphosphate reductase from Clostridium perfringens (strain ATCC 13124 / DSM 756 / JCM 1290 / NCIMB 6125 / NCTC 8237 / Type A).